Reading from the N-terminus, the 321-residue chain is Gap junction delta-2 protein (321 aa).

Residues 1–19 (MGEWTILERLLEAAVQQHS) are Cytoplasmic-facing. A helical membrane pass occupies residues 20–42 (TMIGRILLTVVVIFRILIVAIVG). At 43 to 75 (ETVYDDEQTMFVCNTLQPGCNQACYDRAFPISH) the chain is on the extracellular side. The chain crosses the membrane as a helical span at residues 76–98 (IRYWVFQIIMVCTPSLCFITYSV). The Cytoplasmic portion of the chain corresponds to 99–197 (HQSAKQRERR…KLRRQEGISR (99 aa)). The tract at residues 120–141 (PAESIGGPGGTGGGGSGGSKRE) is disordered. Gly residues predominate over residues 125–137 (GGPGGTGGGGSGG). A helical transmembrane segment spans residues 198–220 (FYIIQVVFRNALEIGFLVGQYFL). The Extracellular portion of the chain corresponds to 221-252 (YGFSVPGLYECNRYPCIKEVECYVSRPTEKTV). A helical membrane pass occupies residues 253 to 275 (FLVFMFAVSGICVVLNLAELNHL). Topologically, residues 276–321 (GWRKIKLAVRGAQAKRKSVYEIRNKDLPRVSVPNFGRTQSSDSAYV) are cytoplasmic.

The protein belongs to the connexin family. Delta-type subfamily. In terms of assembly, a connexon is composed of a hexamer of connexins. As to expression, highly expressed in neurons.

Its subcellular location is the cell membrane. The protein localises to the cell junction. The protein resides in the gap junction. Its function is as follows. One gap junction consists of a cluster of closely packed pairs of transmembrane channels, the connexons, through which materials of low MW diffuse from one cell to a neighboring cell. This chain is Gap junction delta-2 protein (Gjd2), found in Mus musculus (Mouse).